Reading from the N-terminus, the 57-residue chain is MKVMSANANVVAAKIMNNAKNHVAAQRGVTATTNAPAVTSLKKPRSHAALGNETNSL.

This is an uncharacterized protein from Saccharomyces cerevisiae (strain ATCC 204508 / S288c) (Baker's yeast).